The chain runs to 100 residues: Small ribosomal subunit protein uS14 (100 aa).

This sequence belongs to the universal ribosomal protein uS14 family. Part of the 30S ribosomal subunit. Contacts proteins S3 and S10.

Functionally, binds 16S rRNA, required for the assembly of 30S particles and may also be responsible for determining the conformation of the 16S rRNA at the A site. In Synechococcus sp. (strain CC9311), this protein is Small ribosomal subunit protein uS14.